We begin with the raw amino-acid sequence, 37 residues long: Large ribosomal subunit protein bL36 (37 aa).

It belongs to the bacterial ribosomal protein bL36 family.

The sequence is that of Large ribosomal subunit protein bL36 from Cutibacterium acnes (strain DSM 16379 / KPA171202) (Propionibacterium acnes).